A 216-amino-acid chain; its full sequence is Putative cat eye syndrome critical region protein 9 (216 aa).

A signal peptide spans 1 to 23 (MQSHLAPLACAAAAGRAGGSCQA). Asn148 is a glycosylation site (N-linked (GlcNAc...) asparagine).

Ubiquitously expressed with higher expression in heart.

The protein localises to the secreted. This is Putative cat eye syndrome critical region protein 9 (CECR9) from Homo sapiens (Human).